Reading from the N-terminus, the 74-residue chain is Arabinogalactan protein 20 (74 aa).

An N-terminal signal peptide occupies residues 1 to 26 (MASRNSVAVIALFAFVFAVISPFAGA). At Gln27 the chain carries Pyrrolidone carboxylic acid. Residues Pro31, Pro33, and Pro35 each carry the 4-hydroxyproline modification. O-linked (Ara...) hydroxyproline glycosylation is found at Pro31, Pro33, and Pro35. Ser37 is lipidated: GPI-anchor amidated serine. Residues 38-74 (DGTSIDQGIAYLLMVVALVLTYLIHPLDASSSSYTFF) constitute a propeptide, removed in mature form.

Belongs to the AG-peptide AGP family. Post-translationally, contains 4-hydroxyproline; hydroxylated on Pro-31, Pro-33 and Pro-35. O-glycosylated on hydroxyprolines; noncontiguous hydroxylproline residues are glycosylated with arabinogalactan.

The protein localises to the cell membrane. Its function is as follows. Proteoglycan that seems to be implicated in diverse developmental roles such as differentiation, cell-cell recognition, embryogenesis and programmed cell death. This Arabidopsis thaliana (Mouse-ear cress) protein is Arabinogalactan protein 20.